Consider the following 420-residue polypeptide: Beta-arrestin-2 (420 aa).

Tyr48 bears the Phosphotyrosine mark. A hydroxyproline; by PHD2 mark is found at Pro176 and Pro181. Positions Ala240–Gly409 are interaction with TRAF6. Ser360 is subject to Phosphoserine. The interval Pro374 to Cys420 is interaction with AP2B1. The residue at position 393 (Thr393) is a Phosphothreonine. Residues Asp396–Arg406 carry the [DE]-X(1,2)-F-X-X-[FL]-X-X-X-R motif motif.

Belongs to the arrestin family. As to quaternary structure, homooligomer; the self-association is mediated by InsP6-binding. Heterooligomer with ARRB1; the association is mediated by InsP6-binding. Interacts with ADRB2 and CHRM2. Interacts with PDE4A. Interacts with PDE4D. Interacts with MAPK10, MAPK1 and MAPK3. Interacts with DRD2. Interacts with FSHR. Interacts with CLTC. Interacts with HTR2C. Interacts with CRR5. Interacts with CXCR4. Interacts with SRC. Interacts with DUSP16; the interaction is interrupted by stimulation of AGTR1 and activation of MAPK10. Interacts with CHUK; the interaction is enhanced stimulation of ADRB2. Interacts with RELA. Interacts with MDM2; the interaction is enhanced by activation of GPCRs. Interacts with SLC9A5. Interacts with TRAF6. Interacts with IGF1R. Interacts with ENG. Interacts with KIR2DL1, KIR2DL3 and KIR2DL4. Interacts with LDLR. Interacts with AP2B1. Interacts with C5AR1. Interacts with RAF1. Interacts with MAP2K1. Interacts with MAPK1. Interacts with MAPK10; the interaction enhances MAPK10 activation by MAP3K5. Interacts with MAP2K4; the interaction is enhanced by presence of MAP3K5 and MAPK10. Interacts with MAP3K5. Interacts with AKT1. Interacts with IKBKB and MAP3K14. Interacts with SMO (activated). Interacts with GSK3A and GSK3B. Associates with protein phosphatase 2A (PP2A). Interacts with CXCR4; the interaction is dependent on C-terminal phosphorylation of CXCR4 and allows activation of MAPK1 and MAPK3. Interacts with GPR143. Interacts with HCK and CXCR1 (phosphorylated). Interacts with ACKR3 and ACKR4. Interacts with ARRDC1; the interaction is direct. Interacts with GPR61, GPR62 and GPR135. Interacts (via NACHT and LRR domains) with NLRP3; this interaction is direct and inducible by omega-3 polyunsaturated fatty acids (PUFAs). Interacts with FFAR4 (via C-terminus); this interaction is stimulated by long-chain fatty acids (LCFAs). Interacts with GPR35. Interacts with GPR84. Interacts with TIGIT; this interaction inhibits the NF-kappa-B pathway. Interacts with TGFBR3. In terms of processing, phosphorylated at Thr-382 in the cytoplasm; probably dephosphorylated at the plasma membrane. The phosphorylation does not regulate internalization and recycling of ADRB2, interaction with clathrin or AP2B1. The ubiquitination status appears to regulate the formation and trafficking of beta-arrestin-GPCR complexes and signaling. Ubiquitination appears to occur GPCR-specific. Ubiquitinated by MDM2; the ubiquitination is required for rapid internalization of ADRB2. Deubiquitinated by USP33; the deubiquitination leads to a dissociation of the beta-arrestin-GPCR complex. Stimulation of a class A GPCR, such as ADRB2, induces transient ubiquitination and subsequently promotes association with USP33. Stimulation of a class B GPCR promotes a sustained ubiquitination. Deubiquitinated by USP20; allowing USP20 to deubiquitinate TRAF6 leading to inhibition of NF-kappa-B signaling. Post-translationally, hydroxylation by PHD2 modulates the rate of internalization by slowing down recruitment to the plasma membrane and inhibiting subsequent co-internalization with class A receptors. Found in a variety of tissues. The short isoform is the most abundant form in all tissues.

It localises to the cytoplasm. It is found in the nucleus. Its subcellular location is the cell membrane. The protein resides in the membrane. The protein localises to the clathrin-coated pit. It localises to the cytoplasmic vesicle. In terms of biological role, functions in regulating agonist-mediated G-protein coupled receptor (GPCR) signaling by mediating both receptor desensitization and resensitization processes. During homologous desensitization, beta-arrestins bind to the GPRK-phosphorylated receptor and sterically preclude its coupling to the cognate G-protein; the binding appears to require additional receptor determinants exposed only in the active receptor conformation. The beta-arrestins target many receptors for internalization by acting as endocytic adapters (CLASPs, clathrin-associated sorting proteins) and recruiting the GPRCs to the adapter protein 2 complex 2 (AP-2) in clathrin-coated pits (CCPs). However, the extent of beta-arrestin involvement appears to vary significantly depending on the receptor, agonist and cell type. Internalized arrestin-receptor complexes traffic to intracellular endosomes, where they remain uncoupled from G-proteins. Two different modes of arrestin-mediated internalization occur. Class A receptors, like ADRB2, OPRM1, ENDRA, D1AR and ADRA1B dissociate from beta-arrestin at or near the plasma membrane and undergo rapid recycling. Class B receptors, like AVPR2, AGTR1, NTSR1, TRHR and TACR1 internalize as a complex with arrestin and traffic with it to endosomal vesicles, presumably as desensitized receptors, for extended periods of time. Receptor resensitization then requires that receptor-bound arrestin is removed so that the receptor can be dephosphorylated and returned to the plasma membrane. Mediates endocytosis of CCR7 following ligation of CCL19 but not CCL21. Involved in internalization of P2RY1, P2RY4, P2RY6 and P2RY11 and ATP-stimulated internalization of P2RY2. Involved in phosphorylation-dependent internalization of OPRD1 and subsequent recycling or degradation. Involved in ubiquitination of IGF1R. Beta-arrestins function as multivalent adapter proteins that can switch the GPCR from a G-protein signaling mode that transmits short-lived signals from the plasma membrane via small molecule second messengers and ion channels to a beta-arrestin signaling mode that transmits a distinct set of signals that are initiated as the receptor internalizes and transits the intracellular compartment. Acts as a signaling scaffold for MAPK pathways such as MAPK1/3 (ERK1/2) and MAPK10 (JNK3). ERK1/2 and JNK3 activated by the beta-arrestin scaffold are largely excluded from the nucleus and confined to cytoplasmic locations such as endocytic vesicles, also called beta-arrestin signalosomes. Acts as a signaling scaffold for the AKT1 pathway. GPCRs for which the beta-arrestin-mediated signaling relies on both ARRB1 and ARRB2 (codependent regulation) include ADRB2, F2RL1 and PTH1R. For some GPCRs the beta-arrestin-mediated signaling relies on either ARRB1 or ARRB2 and is inhibited by the other respective beta-arrestin form (reciprocal regulation). Increases ERK1/2 signaling in AGTR1- and AVPR2-mediated activation (reciprocal regulation). Involved in CCR7-mediated ERK1/2 signaling involving ligand CCL19. Is involved in type-1A angiotensin II receptor/AGTR1-mediated ERK activity. Is involved in type-1A angiotensin II receptor/AGTR1-mediated MAPK10 activity. Is involved in dopamine-stimulated AKT1 activity in the striatum by disrupting the association of AKT1 with its negative regulator PP2A. Involved in AGTR1-mediated chemotaxis. Appears to function as signaling scaffold involved in regulation of MIP-1-beta-stimulated CCR5-dependent chemotaxis. Involved in attenuation of NF-kappa-B-dependent transcription in response to GPCR or cytokine stimulation by interacting with and stabilizing CHUK. Suppresses UV-induced NF-kappa-B-dependent activation by interacting with CHUK. The function is promoted by stimulation of ADRB2 and dephosphorylation of ARRB2. Involved in p53/TP53-mediated apoptosis by regulating MDM2 and reducing the MDM2-mediated degradation of p53/TP53. May serve as nuclear messenger for GPCRs. Upon stimulation of OR1D2, may be involved in regulation of gene expression during the early processes of fertilization. Also involved in regulation of receptors other than GPCRs. Involved in endocytosis of TGFBR2 and TGFBR3 and down-regulates TGF-beta signaling such as NF-kappa-B activation. Involved in endocytosis of low-density lipoprotein receptor/LDLR. Involved in endocytosis of smoothened homolog/Smo, which also requires GRK2. Involved in endocytosis of SLC9A5. Involved in endocytosis of ENG and subsequent TGF-beta-mediated ERK activation and migration of epithelial cells. Involved in Toll-like receptor and IL-1 receptor signaling through the interaction with TRAF6 which prevents TRAF6 autoubiquitination and oligomerization required for activation of NF-kappa-B and JUN. Involved in insulin resistance by acting as insulin-induced signaling scaffold for SRC, AKT1 and INSR. Involved in regulation of inhibitory signaling of natural killer cells by recruiting PTPN6 and PTPN11 to KIR2DL1. Involved in IL8-mediated granule release in neutrophils. Involved in the internalization of the atypical chemokine receptor ACKR3. Acts as an adapter protein coupling FFAR4 receptor to specific downstream signaling pathways, as well as mediating receptor endocytosis. During the activation step of NLRP3 inflammasome, directly associates with NLRP3 leading to inhibition of pro-inflammatory cytokine release and inhibition of inflammation. This Bos taurus (Bovine) protein is Beta-arrestin-2 (ARRB2).